The chain runs to 1381 residues: Hepatocyte growth factor receptor (1381 aa).

The signal sequence occupies residues 1–24 (MKAPAVLVPGILVLLFTLVQRSNG). The Extracellular portion of the chain corresponds to 25–932 (ECKEALAKSE…VIVQPDQNFT (908 aa)). In terms of domain architecture, Sema spans 27–515 (KEALAKSEMN…TGKKITKIPL (489 aa)). A glycan (N-linked (GlcNAc...) asparagine) is linked at asparagine 45. Cystine bridges form between cysteine 95-cysteine 101, cysteine 98-cysteine 160, cysteine 133-cysteine 141, and cysteine 172-cysteine 175. Residue asparagine 106 is glycosylated (N-linked (GlcNAc...) asparagine). A glycan (N-linked (GlcNAc...) asparagine) is linked at asparagine 149. N-linked (GlcNAc...) asparagine glycosylation occurs at asparagine 202. Disulfide bonds link cysteine 298/cysteine 363 and cysteine 385/cysteine 397. Asparagine 399 and asparagine 405 each carry an N-linked (GlcNAc...) asparagine glycan. 4 disulfides stabilise this stretch: cysteine 520–cysteine 538, cysteine 526–cysteine 561, cysteine 529–cysteine 545, and cysteine 541–cysteine 551. 3 consecutive IPT/TIG domains span residues 563–655 (PAIY…FSYV), 657–739 (PIIT…FSYR), and 742–836 (PIVY…LIYV). Threonine 582 carries an O-linked (Man) threonine glycan. Asparagine 607 and asparagine 635 each carry an N-linked (GlcNAc...) asparagine glycan. 2 O-linked (Man) threonine glycosylation sites follow: threonine 676 and threonine 761. Asparagine 785, asparagine 879, and asparagine 930 each carry an N-linked (GlcNAc...) asparagine glycan. Residues 933-955 (GLIAGVVSISIALLLLLGLFLWL) form a helical membrane-spanning segment. The Cytoplasmic portion of the chain corresponds to 956-1381 (KKRKQIKDLG…EDNADDEVDT (426 aa)). Serine 966 is modified (phosphoserine). Residue threonine 977 is modified to Phosphothreonine. Residues serine 990, serine 997, and serine 1000 each carry the phosphoserine modification. Position 1003 is a phosphotyrosine (tyrosine 1003). Residues 1078–1345 (VHFNEVIGRG…RISAIFSTFI (268 aa)) enclose the Protein kinase domain. ATP is bound by residues 1084 to 1092 (IGRGHFGCV) and lysine 1110. Aspartate 1204 serves as the catalytic Proton acceptor. Residues 1212-1381 (LDEKFTVKVA…EDNADDEVDT (170 aa)) form an interaction with RANBP9 region. Tyrosine 1230 carries the post-translational modification Phosphotyrosine. Phosphotyrosine; by autocatalysis is present on residues tyrosine 1234 and tyrosine 1235. Threonine 1289 is subject to Phosphothreonine. The tract at residues 1320-1359 (WHPKAEMRPSFSELVSRISAIFSTFIGEHYVHVNATYVNV) is interaction with MUC20. Tyrosine 1349 and tyrosine 1356 each carry phosphotyrosine; by autocatalysis. Tyrosine 1365 carries the post-translational modification Phosphotyrosine.

The protein belongs to the protein kinase superfamily. Tyr protein kinase family. As to quaternary structure, heterodimer made of an alpha chain (50 kDa) and a beta chain (145 kDa) which are disulfide linked. Binds PLXNB1. Interacts when phosphorylated with downstream effectors including STAT3, PIK3R1, SRC, PCLG1, GRB2 and GAB1. Interacts with SPSB1, SPSB2 and SPSB4. Interacts with INPP5D/SHIP1. When phosphorylated at Tyr-1356, interacts with INPPL1/SHIP2. Interacts with RANBP9 and RANBP10, as well as SPSB1, SPSB2, SPSB3 and SPSB4. SPSB1 binding occurs in the presence and in the absence of HGF, however HGF treatment has a positive effect on this interaction. Interacts with MUC20; prevents interaction with GRB2 and suppresses hepatocyte growth factor-induced cell proliferation. Interacts with GRB10. Interacts with PTPN1 and PTPN2. Interacts with HSP90AA1 and HSP90AB1; the interaction suppresses MET kinase activity. Interacts with tensin TNS3. Interacts (when phosphorylated) with tensin TNS4 (via SH2 domain); the interaction increases MET protein stability by inhibiting MET endocytosis and subsequent lysosomal degradation. Post-translationally, autophosphorylated in response to ligand binding on Tyr-1234 and Tyr-1235 in the kinase domain leading to further phosphorylation of Tyr-1349 and Tyr-1356 in the C-terminal multifunctional docking site. Dephosphorylated by PTPRJ at Tyr-1349 and Tyr-1365. Dephosphorylated by PTPN1 and PTPN2. In terms of processing, ubiquitinated. Ubiquitination by CBL regulates the receptor stability and activity through proteasomal degradation. O-mannosylation of IPT/TIG domains by TMEM260 is required for protein maturation. O-mannosylated residues are composed of single mannose glycans that are not elongated or modified.

It is found in the membrane. The enzyme catalyses L-tyrosyl-[protein] + ATP = O-phospho-L-tyrosyl-[protein] + ADP + H(+). In its inactive state, the C-terminal tail interacts with the catalytic domain and inhibits the kinase activity. Upon ligand binding, the C-terminal tail is displaced and becomes phosphorylated, thus increasing the kinase activity. In terms of biological role, receptor tyrosine kinase that transduces signals from the extracellular matrix into the cytoplasm by binding to hepatocyte growth factor/HGF ligand. Regulates many physiological processes including proliferation, scattering, morphogenesis and survival. Ligand binding at the cell surface induces autophosphorylation of MET on its intracellular domain that provides docking sites for downstream signaling molecules. Following activation by ligand, interacts with the PI3-kinase subunit PIK3R1, PLCG1, SRC, GRB2, STAT3 or the adapter GAB1. Recruitment of these downstream effectors by MET leads to the activation of several signaling cascades including the RAS-ERK, PI3 kinase-AKT, or PLCgamma-PKC. The RAS-ERK activation is associated with the morphogenetic effects while PI3K/AKT coordinates prosurvival effects. During embryonic development, MET signaling plays a role in gastrulation, development and migration of muscles and neuronal precursors, angiogenesis and kidney formation. In adults, participates in wound healing as well as organ regeneration and tissue remodeling. Also promotes differentiation and proliferation of hematopoietic cells. The protein is Hepatocyte growth factor receptor (MET) of Papio anubis (Olive baboon).